A 395-amino-acid chain; its full sequence is Selection and upkeep of intraepithelial T-cells protein 7 (395 aa).

A signal peptide spans 1–25; that stretch reads MMKPEFFCFSGFCVYFLFLQVVVSS. The region spanning 26–141 is the Ig-like V-type domain; that stretch reads EKLRVTTPTR…DAAIMNLNVT (116 aa). Residues 26-248 lie on the Extracellular side of the membrane; sequence EKLRVTTPTR…FNRDRIWMES (223 aa). An intrachain disulfide couples Cys-49 to Cys-123. N-linked (GlcNAc...) asparagine glycans are attached at residues Asn-92 and Asn-139. Positions 142–233 constitute an Ig-like C1-type domain; it reads AVGLETEIHV…TGEEKQTSII (92 aa). Residues Cys-163 and Cys-217 are joined by a disulfide bond. The chain crosses the membrane as a helical span at residues 249 to 269; the sequence is LASIVWIMLSVYILYIICFYW. At 270–287 the chain is on the cytoplasmic side; the sequence is RTGCASGCLSKCFCVVTS. The helical transmembrane segment at 288–308 threads the bilayer; it reads WPVQIVHLLFCTGTFFAIYLP. Over 309–329 the chain is Extracellular; it reads HRSRVSLSDPQFPLYNNWITE. The helical transmembrane segment at 330 to 350 threads the bilayer; the sequence is LLFVILFLTICFALPIILLFI. Topologically, residues 351–395 are cytoplasmic; the sequence is QFQFTSLTKWEKNKDGIMDQPRLGKAHETSSLYRKKTGKSWEQEK. The disordered stretch occupies residues 371–395; the sequence is PRLGKAHETSSLYRKKTGKSWEQEK.

The protein belongs to the SKINT family. Expressed in skin, thymus, testis and, to a lower extent, bladder.

It localises to the membrane. May act by engaging a cell surface molecule on immature T-cells in the embryonic thymus. This is Selection and upkeep of intraepithelial T-cells protein 7 (Skint7) from Mus musculus (Mouse).